The following is a 505-amino-acid chain: Probable alpha-L-arabinofuranosidase C (505 aa).

N-linked (GlcNAc...) asparagine glycans are attached at residues Asn-81, Asn-152, Asn-269, and Asn-438.

This sequence belongs to the glycosyl hydrolase 51 family.

The protein localises to the secreted. The catalysed reaction is Hydrolysis of terminal non-reducing alpha-L-arabinofuranoside residues in alpha-L-arabinosides.. The protein operates within glycan metabolism; L-arabinan degradation. In terms of biological role, alpha-L-arabinofuranosidase involved in the degradation of arabinoxylan, a major component of plant hemicellulose. Acts only on small linear 1,5-alpha-linked L-arabinofuranosyl oligosaccharides. This chain is Probable alpha-L-arabinofuranosidase C (abfC), found in Aspergillus fumigatus (strain ATCC MYA-4609 / CBS 101355 / FGSC A1100 / Af293) (Neosartorya fumigata).